The following is an 893-amino-acid chain: Ubiquitin-like protease 2 (893 aa).

The tract at residues 538 to 800 (PVVLLVKDIK…YNLILQQADK (263 aa)) is protease. Active-site residues include H644, D678, and C743.

This sequence belongs to the peptidase C48 family.

The protein localises to the nucleus. It localises to the cytoplasm. The protein resides in the cytosol. Protease that catalyzes two essential functions in the smo-1 pathway: processing of full-length smo-1 to their mature forms and deconjugation of smo-1 from targeted proteins. May deconjugate smo-1 from the cadherin protein hmr-1 and plays a role in its recruitment to and the maintenance of adherens junctions. Required for epidermal morphogenesis during embryonic development. In Caenorhabditis elegans, this protein is Ubiquitin-like protease 2.